Reading from the N-terminus, the 606-residue chain is Mitogen-activated protein kinase kinase kinase 7 (606 aa).

An interaction with MAPK8IP1 region spans residues 1–300 (MSTASAASSS…FPGADEPLQY (300 aa)). Residues 36-291 (IEVEEVVGRG…KIMTHLMRYF (256 aa)) form the Protein kinase domain. Residues 42–50 (VGRGAFGVV) and Lys-63 contribute to the ATP site. Lys-72 is covalently cross-linked (Glycyl lysine isopeptide (Lys-Gly) (interchain with G-Cter in ubiquitin)). Asp-156 acts as the Proton acceptor in catalysis. Lys-158 participates in a covalent cross-link: Glycyl lysine isopeptide (Lys-Gly) (interchain with G-Cter in ubiquitin). Phosphothreonine; by autocatalysis occurs at positions 184 and 187. A Phosphoserine; by autocatalysis modification is found at Ser-192. A Glycyl lysine isopeptide (Lys-Gly) (interchain with G-Cter in ubiquitin) cross-link involves residue Lys-209. 2 disordered regions span residues 301-338 (PCQY…MEQV) and 354-391 (KNQA…MSAD). Residues 306–338 (DEGQSNSATSTGSFMDIASTNTSNKSDTNMEQV) show a composition bias toward polar residues. A compositionally biased stretch (low complexity) spans 361–375 (SDSGRLSLGASRGSS). Ser-367, Ser-389, and Ser-439 each carry phosphoserine. Residues 443–452 (LTVTGTEPGQ) show a composition bias toward polar residues. Residues 443–492 (LTVTGTEPGQVSSRSSSPSVRMITTSGPTSEKPARSLPWTPDDSTDTNGS) form a disordered region. Over residues 453-463 (VSSRSSSPSVR) the composition is skewed to low complexity. The residue at position 455 (Ser-455) is a Phosphoserine.

Belongs to the protein kinase superfamily. STE Ser/Thr protein kinase family. MAP kinase kinase kinase subfamily. Can form homodimer. Binds both upstream activators and downstream substrates in multimolecular complexes. Interacts with TAB1/MAP3K7IP1, TAB2/MAP3K7IP2 and TAB3/MAP3K7IP3. Identified in the TRIKA2 complex composed of MAP3K7/TAK1, TAB1/MAP3K7IP1 and TAB2/MAP3K7IP2. Interacts with PPM1L and PPM1B/PP2CB. Interaction with PP2A and PPP6C leads to its repressed activity. Interacts with TRAF6 and TAB1/MAP3K7IP1; during IL-1 signaling. Interacts with TAOK1 and TAOK2; interaction with TAOK2 interferes with MAP3K7 interaction with IKKA, thus preventing NF-kappa-B activation. Interacts with DYNC2I2 (via WD domains). Interacts with CYLD and RBCK1. Interacts with TGFBR1; induces MAP3K7/TAK1 activation by TRAF6. Interacts with MAPK8IP1 and SMAD6. Interacts with isoform 1 of VRK2. Interacts with DAB2; the interaction is induced by TGF-beta stimulation and may mediate TGF-beta stimulated JNK activation. Interacts with TRIM5. Part of a complex containing ITCH, NDFIP1 and MAP3K7. Interacts with PLEKHM1 (via N- and C-terminus). Found in a complex with SH3RF1, RAC2, MAP2K7/MKK7, MAPK8IP1/JIP1, MAPK8/JNK1 and MAPK9/JNK2. Interacts with SASH1. Interacts with RIPK1. Mg(2+) serves as cofactor. Association with TAB1/MAP3K7IP1 promotes autophosphorylation at Ser-192 and subsequent activation. Association with TAB2/MAP3K7IP2, itself associated with free unanchored Lys-63 polyubiquitin chain, promotes autophosphorylation and subsequent activation of MAP3K7. Dephosphorylation at Ser-192 by PPM1B/PP2CB and at Thr-187 by PP2A and PPP6C leads to inactivation. Deubiquitinated by USP19; leading to negative regulation of TNF-alpha- and IL-1beta-triggered NF-kappa-B activation. Post-translationally, 'Lys-48'-linked polyubiquitination at Lys-72 is induced by TNFalpha, and leads to proteasomal degradation. Undergoes 'Lys-48'-linked polyubiquitination catalyzed by ITCH. 'Lys-63'-linked polyubiquitination at Lys-158 by TRIM8 does not lead to proteasomal degradation but contributes to autophosphorylation and activation. Deubiquitinated by CYLD, a protease that selectively cleaves 'Lys-63'-linked ubiquitin chains.

The protein localises to the cytoplasm. Its subcellular location is the cell membrane. It catalyses the reaction L-seryl-[protein] + ATP = O-phospho-L-seryl-[protein] + ADP + H(+). The enzyme catalyses L-threonyl-[protein] + ATP = O-phospho-L-threonyl-[protein] + ADP + H(+). Its activity is regulated as follows. Activated by pro-inflammatory cytokines and in response to physical and chemical stresses, including osmotic stress, oxidative stress, arsenic and ultraviolet light irradiation. Activated by 'Lys-63'-linked polyubiquitination and by autophosphorylation. Association with TAB1/MAP3K7IP1 and TAB2/MAP3K7IP2 promotes activation through autophosphorylation, whereas PPM1B/PP2CB, PP2A and PPP6C dephosphorylation leads to inactivation. Ceramides are also able to activate MAP3K7/TAK1. Its function is as follows. Serine/threonine kinase which acts as an essential component of the MAP kinase signal transduction pathway. Plays an important role in the cascades of cellular responses evoked by changes in the environment. Mediates signal transduction of TRAF6, various cytokines including interleukin-1 (IL-1), transforming growth factor-beta (TGFB), TGFB-related factors like BMP2 and BMP4, toll-like receptors (TLR), tumor necrosis factor receptor CD40 and B-cell receptor (BCR). Once activated, acts as an upstream activator of the MKK/JNK signal transduction cascade and the p38 MAPK signal transduction cascade through the phosphorylation and activation of several MAP kinase kinases like MAP2K1/MEK1, MAP2K3/MKK3, MAP2K6/MKK6 and MAP2K7/MKK7. These MAP2Ks in turn activate p38 MAPKs and c-jun N-terminal kinases (JNKs); both p38 MAPK and JNK pathways control the transcription factors activator protein-1 (AP-1). Independently of MAP2Ks and p38 MAPKs, acts as a key activator of NF-kappa-B by promoting activation of the I-kappa-B-kinase (IKK) core complex. Mechanistically, recruited to polyubiquitin chains of RIPK2 and IKBKG/NEMO via TAB2/MAP3K7IP2 and TAB3/MAP3K7IP3, and catalyzes phosphorylation and activation of IKBKB/IKKB component of the IKK complex, leading to NF-kappa-B activation. In osmotic stress signaling, plays a major role in the activation of MAPK8/JNK1, but not that of NF-kappa-B. Promotes TRIM5 capsid-specific restriction activity. Phosphorylates RIPK1 at 'Ser-321' which positively regulates RIPK1 interaction with RIPK3 to promote necroptosis but negatively regulates RIPK1 kinase activity and its interaction with FADD to mediate apoptosis. Phosphorylates STING1 in response to cGAMP-activation, promoting association between STEEP1 and STING1 and STING1 translocation to COPII vesicles. The polypeptide is Mitogen-activated protein kinase kinase kinase 7 (Map3k7) (Rattus norvegicus (Rat)).